The chain runs to 181 residues: ATP synthase subunit delta (181 aa).

Belongs to the ATPase delta chain family. As to quaternary structure, F-type ATPases have 2 components, F(1) - the catalytic core - and F(0) - the membrane proton channel. F(1) has five subunits: alpha(3), beta(3), gamma(1), delta(1), epsilon(1). F(0) has three main subunits: a(1), b(2) and c(10-14). The alpha and beta chains form an alternating ring which encloses part of the gamma chain. F(1) is attached to F(0) by a central stalk formed by the gamma and epsilon chains, while a peripheral stalk is formed by the delta and b chains. The F(1)F(0) complex interacts with SpoIIIJ and YqjG; YqgA is found in the same complex. Interacts with FloT.

It localises to the cell membrane. Its subcellular location is the membrane raft. F(1)F(0) ATP synthase produces ATP from ADP in the presence of a proton or sodium gradient. F-type ATPases consist of two structural domains, F(1) containing the extramembraneous catalytic core and F(0) containing the membrane proton channel, linked together by a central stalk and a peripheral stalk. During catalysis, ATP synthesis in the catalytic domain of F(1) is coupled via a rotary mechanism of the central stalk subunits to proton translocation. Functionally, this protein is part of the stalk that links CF(0) to CF(1). It either transmits conformational changes from CF(0) to CF(1) or is implicated in proton conduction. The protein is ATP synthase subunit delta of Bacillus subtilis (strain 168).